A 331-amino-acid polypeptide reads, in one-letter code: Nacrein-like protein P1 (331 aa).

The region spanning 1–331 (QSPINIVSYD…LHALRNVEGY (331 aa)) is the Alpha-carbonic anhydrase domain. Zn(2+) is bound by residues H69, H71, and H94. The segment at 138-240 (DEPDDEECKR…GENGHKHGCR (103 aa)) is disordered. Over residues 144–156 (ECKRILKGHHPDN) the composition is skewed to basic and acidic residues. Over residues 157 to 232 (NENGNGDNGN…NNGENGNNGE (76 aa)) the composition is skewed to low complexity. 24 consecutive repeat copies span residues 162 to 164 (GDN), 165 to 167 (GNN), 168 to 170 (GYN), 171 to 173 (GDN), 174 to 176 (GNN), 177 to 179 (GDN), 180 to 182 (GNN), 183 to 185 (GYN), 186 to 188 (GDN), 189 to 191 (GNN), 192 to 194 (GDN), 195 to 197 (GNN), 198 to 200 (GYN), 201 to 203 (GDN), 204 to 206 (GNN), 207 to 209 (GDN), 210 to 212 (GNN), 213 to 215 (GEN), 216 to 218 (GNN), 219 to 221 (GEN), 222 to 224 (GNN), 225 to 227 (GEN), 228 to 229 (GN), and 231 to 233 (GEN). A 24 X 3 AA approximate tandem repeats of G-X-N region spans residues 162–233 (GDNGNNGYNG…NGENGNNGEN (72 aa)). Residue 298-299 (TT) coordinates substrate.

Belongs to the alpha-carbonic anhydrase family. As to quaternary structure, homooligomer; disulfide-linked. May also be disulfide-linked to insoluble organic matrix. It depends on Zn(2+) as a cofactor. In terms of tissue distribution, expressed in the mantle.

Its subcellular location is the secreted. It is found in the extracellular space. The protein localises to the extracellular matrix. It carries out the reaction hydrogencarbonate + H(+) = CO2 + H2O. Acts as a negative regulator for calcification in the shells of mollusks. May function both as a calcium concentrator and as a carbonic anhydrase required for production of carbonate ions, which are assembled to CaCO(3) at mineralization sites. Is important for shell formation in both the calcitic prismatic layer and the aragonitic nacreous layer. Shows inhibitory activity of crystal formation when present in free state but, when attached to the insoluble matrix, may regulate the form and size of aragonite crystal. In Mizuhopecten yessoensis (Japanese scallop), this protein is Nacrein-like protein P1.